The chain runs to 158 residues: Small ribosomal subunit protein uS9 (158 aa).

The protein belongs to the universal ribosomal protein uS9 family.

The sequence is that of Small ribosomal subunit protein uS9 from Nitrobacter winogradskyi (strain ATCC 25391 / DSM 10237 / CIP 104748 / NCIMB 11846 / Nb-255).